The chain runs to 876 residues: Alanine--tRNA ligase (876 aa).

Lys74 is subject to N6-acetyllysine. Residues His564, His568, Cys666, and His670 each contribute to the Zn(2+) site.

This sequence belongs to the class-II aminoacyl-tRNA synthetase family. In terms of assembly, homotetramer. It depends on Zn(2+) as a cofactor.

The protein resides in the cytoplasm. The catalysed reaction is tRNA(Ala) + L-alanine + ATP = L-alanyl-tRNA(Ala) + AMP + diphosphate. In terms of biological role, catalyzes the attachment of alanine to tRNA(Ala) in a two-step reaction: alanine is first activated by ATP to form Ala-AMP and then transferred to the acceptor end of tRNA(Ala). Also edits incorrectly charged Ser-tRNA(Ala) and Gly-tRNA(Ala) via its editing domain. This is Alanine--tRNA ligase from Shigella boydii serotype 4 (strain Sb227).